The following is a 441-amino-acid chain: uncharacterized protein (441 aa).

78 to 85 (GPRQAGKT) contacts ATP.

This is an uncharacterized protein from Mycobacterium bovis (strain ATCC BAA-935 / AF2122/97).